Here is a 417-residue protein sequence, read N- to C-terminus: Pelargonidin 3-O-(6-caffeoylglucoside) 5-O-(6-O-malonylglucoside) 4'''-malonyltransferase (417 aa).

Catalysis depends on proton acceptor residues His-147 and Asp-360.

Belongs to the plant acyltransferase family. As to quaternary structure, monomer. As to expression, expressed at higher level in recently opened, fully pigmented flowers.

It catalyses the reaction 4'''-demalonylsalvianin + malonyl-CoA = salvianin + CoA. It participates in pigment biosynthesis; anthocyanin biosynthesis. Inhibited by the following metal ions: Cd(2+), Cu(2+), Fe(2+), Hg(2+) and Zn(2+). Activity is strongly inhibited by CoA-SH and partially inhibited by acetyl-CoA, caffeic acid and bisdemalonylsalvianin. Its function is as follows. Catalyzes the transfer of the malonyl group from malonyl-CoA to the 4'''-hydroxyl group of the 5-glucosyl moiety of anthocyanins. Anthocyanins are ubiquitous colored pigments that are responsible for petal color. The polypeptide is Pelargonidin 3-O-(6-caffeoylglucoside) 5-O-(6-O-malonylglucoside) 4'''-malonyltransferase (Salvia splendens (Scarlet sage)).